Consider the following 561-residue polypeptide: Acyl-CoA ligase frbB (561 aa).

ATP contacts are provided by residues 213–221, 354–359, Asp-437, Arg-456, and Lys-551; these read TSGTSGAQK and PGWGLT. The interval 284–354 is SBD1; it reads DLKRVLGSIA…TLRPKWHLQP (71 aa). The interval 355–417 is SBD2; it reads GWGLTEGGGA…MKSPSVIAGY (63 aa).

It belongs to the ATP-dependent AMP-binding enzyme family.

It functions in the pathway antifungal biosynthesis. In terms of biological role, acyl-CoA ligase; part of the gene cluster that mediates the biosynthesis of the antifungal antibiotic FR901469, an inhibitor of beta-1,3-glucansynthase, exerting antifungal activity against the pathogenes Candida albicans and Aspergillus fumigatus. FR901469 is a cyclic depsipeptide containing 12 amino acid residues and a fatty acid chain. The NRPS frbI contains 12 modules responsible for the formation of the depsipeptide backbone which is denoted as Acyl-Thr-Ala-Tyr-Val-4OHPro-Thr-Thr-3OHPro-threo3OHGln-Gly-Thr-Orn-OH (C71H116N14O23). The PKS frbB is probably involved in the production of the hydrocarbon chain, and the acyl-CoA ligase frbC might be involved in the transport of the chain to the peptide ptoduct of frbI. Because FR901469 contains 3 hydroxylated amino acid residues, the 3 oxygenases frbA, frbH, and frbJ might be participating in amino acid hydroxylation. As no thioesterase domains were detected in frbI or frbB, the thioesterases frbD and frbE may instead release and cyclize the products of the NRPS and PKS, respectively. This is Acyl-CoA ligase frbB from Dothideomycetidae sp. (strain 11243) (Fungal sp. (strain No.11243)).